A 361-amino-acid polypeptide reads, in one-letter code: MKTPHILMMAAGTGGHVFPALAVSEELSKRGAIIHWLGTPNGMENGLVAPTGYPFHAIEMQGLRGKGIGRLLKMPVTLLSATMAVIKIIRGNKIDMVVGFGGYVSAPGGIAARLTKTPLIIHEQNAIAGMSNRYLAKMATKVLQAFENTFGNDQLDAKLETVGNPVRNAISGVAEPTIRYDINDQSPLKLLVVGGSLGAQVLNDTVPKALALIERPFEVRHQCGRHNEVTTQSAYASEDLSAHEFTVQPFIDDMAAAYNWADIVVCRAGALTVTEIQNVGIAAIFVPLPSAVDDHQTANARTLTLHKAAILLPQNELTPKRLSDELALLDRAACLEMAKKGHALANRQACQHVADIIWQAL.

UDP-N-acetyl-alpha-D-glucosamine-binding positions include 13 to 15 (TGG), Asn-125, Arg-167, Ser-196, Ile-251, 270 to 275 (ALTVTE), and Gln-296.

The protein belongs to the glycosyltransferase 28 family. MurG subfamily.

It localises to the cell inner membrane. The enzyme catalyses di-trans,octa-cis-undecaprenyl diphospho-N-acetyl-alpha-D-muramoyl-L-alanyl-D-glutamyl-meso-2,6-diaminopimeloyl-D-alanyl-D-alanine + UDP-N-acetyl-alpha-D-glucosamine = di-trans,octa-cis-undecaprenyl diphospho-[N-acetyl-alpha-D-glucosaminyl-(1-&gt;4)]-N-acetyl-alpha-D-muramoyl-L-alanyl-D-glutamyl-meso-2,6-diaminopimeloyl-D-alanyl-D-alanine + UDP + H(+). It functions in the pathway cell wall biogenesis; peptidoglycan biosynthesis. In terms of biological role, cell wall formation. Catalyzes the transfer of a GlcNAc subunit on undecaprenyl-pyrophosphoryl-MurNAc-pentapeptide (lipid intermediate I) to form undecaprenyl-pyrophosphoryl-MurNAc-(pentapeptide)GlcNAc (lipid intermediate II). The polypeptide is UDP-N-acetylglucosamine--N-acetylmuramyl-(pentapeptide) pyrophosphoryl-undecaprenol N-acetylglucosamine transferase (Psychrobacter arcticus (strain DSM 17307 / VKM B-2377 / 273-4)).